The following is a 111-amino-acid chain: Large ribosomal subunit protein eL30 (111 aa).

The protein belongs to the eukaryotic ribosomal protein eL30 family.

The chain is Large ribosomal subunit protein eL30 (RPL30) from Oryza sativa subsp. japonica (Rice).